A 243-amino-acid polypeptide reads, in one-letter code: 1-(5-phosphoribosyl)-5-[(5-phosphoribosylamino)methylideneamino] imidazole-4-carboxamide isomerase (243 aa).

D8 functions as the Proton acceptor in the catalytic mechanism. The active-site Proton donor is the D129.

Belongs to the HisA/HisF family.

Its subcellular location is the cytoplasm. It catalyses the reaction 1-(5-phospho-beta-D-ribosyl)-5-[(5-phospho-beta-D-ribosylamino)methylideneamino]imidazole-4-carboxamide = 5-[(5-phospho-1-deoxy-D-ribulos-1-ylimino)methylamino]-1-(5-phospho-beta-D-ribosyl)imidazole-4-carboxamide. Its pathway is amino-acid biosynthesis; L-histidine biosynthesis; L-histidine from 5-phospho-alpha-D-ribose 1-diphosphate: step 4/9. This Brucella anthropi (strain ATCC 49188 / DSM 6882 / CCUG 24695 / JCM 21032 / LMG 3331 / NBRC 15819 / NCTC 12168 / Alc 37) (Ochrobactrum anthropi) protein is 1-(5-phosphoribosyl)-5-[(5-phosphoribosylamino)methylideneamino] imidazole-4-carboxamide isomerase.